Consider the following 418-residue polypeptide: UDP-N-acetylglucosamine 1-carboxyvinyltransferase (418 aa).

22–23 (KN) contributes to the phosphoenolpyruvate binding site. R93 lines the UDP-N-acetyl-alpha-D-glucosamine pocket. Catalysis depends on C117, which acts as the Proton donor. The residue at position 117 (C117) is a 2-(S-cysteinyl)pyruvic acid O-phosphothioketal. The UDP-N-acetyl-alpha-D-glucosamine site is built by D305 and V327.

It belongs to the EPSP synthase family. MurA subfamily.

It localises to the cytoplasm. It catalyses the reaction phosphoenolpyruvate + UDP-N-acetyl-alpha-D-glucosamine = UDP-N-acetyl-3-O-(1-carboxyvinyl)-alpha-D-glucosamine + phosphate. It functions in the pathway cell wall biogenesis; peptidoglycan biosynthesis. Functionally, cell wall formation. Adds enolpyruvyl to UDP-N-acetylglucosamine. The sequence is that of UDP-N-acetylglucosamine 1-carboxyvinyltransferase from Alkalilimnicola ehrlichii (strain ATCC BAA-1101 / DSM 17681 / MLHE-1).